The sequence spans 647 residues: Methyl-accepting chemotaxis protein McpK (647 aa).

Over 1-16 the chain is Cytoplasmic; that stretch reads MYDWWVLQLAKLSVSR. Residues 17–37 form a helical membrane-spanning segment; sequence KLMVGFGVLLALLLLVVISSN. Residues 38 to 291 are Periplasmic-facing; that stretch reads RTLTHQTALS…LRESTASRDR (254 aa). Residues 45–287 form the HBM domain; the sequence is ALSEQLAEVA…AGRQLRESTA (243 aa). Residues 292-312 traverse the membrane as a helical segment; sequence ASLWLIAALALAFGCVAGWAI. Topologically, residues 313–647 are cytoplasmic; sequence NRQIVRPLDE…LQAQVGRFRL (335 aa). Residues 314–370 enclose the HAMP domain; the sequence is RQIVRPLDEALAQAEAIAAGDLGKRPQNPLTLQRRDELGQLQRVMQRMGDSLRELVG. The Methyl-accepting transducer domain maps to 375 to 611; it reads GVSQLASSAE…EINRSVLSVR (237 aa).

Belongs to the methyl-accepting chemotaxis (MCP) protein family. Ligand free ligand-binding domain (LBD) is present in a monomer-dimer equilibrium. AlphaKG binding stabilizes the homodimer.

The protein localises to the cell inner membrane. Its function is as follows. Chemotactic-signal transducers respond to changes in the concentration of attractants and repellents in the environment, transduce a signal from the outside to the inside of the cell, and facilitate sensory adaptation through the variation of the level of methylation. McpK is a chemoreceptor that specifically binds and mediates chemotaxis to alpha-ketoglutarate (alphaKG). This Pseudomonas aeruginosa (strain ATCC 15692 / DSM 22644 / CIP 104116 / JCM 14847 / LMG 12228 / 1C / PRS 101 / PAO1) protein is Methyl-accepting chemotaxis protein McpK.